The chain runs to 157 residues: Mini-ribonuclease 3 (157 aa).

Residue Asp18 is part of the active site. The tract at residues Glu126–Cys157 is disordered. The span at Gly130 to Glu141 shows a compositional bias: basic and acidic residues.

Belongs to the MrnC RNase family. As to quaternary structure, homodimer. The cofactor is Mg(2+).

The protein resides in the cytoplasm. In terms of biological role, involved in correct processing of both the 5' and 3' ends of 23S rRNA precursor. Processes 30S rRNA precursor transcript even in absence of ribonuclease 3 (Rnc); Rnc processes 30S rRNA into smaller rRNA precursors. This Desulfitobacterium hafniense (strain Y51) protein is Mini-ribonuclease 3.